The chain runs to 221 residues: Protein-L-isoaspartate O-methyltransferase (221 aa).

Residue S70 is part of the active site.

It belongs to the methyltransferase superfamily. L-isoaspartyl/D-aspartyl protein methyltransferase family.

The protein resides in the cytoplasm. It catalyses the reaction [protein]-L-isoaspartate + S-adenosyl-L-methionine = [protein]-L-isoaspartate alpha-methyl ester + S-adenosyl-L-homocysteine. Functionally, catalyzes the methyl esterification of L-isoaspartyl residues in peptides and proteins that result from spontaneous decomposition of normal L-aspartyl and L-asparaginyl residues. It plays a role in the repair and/or degradation of damaged proteins. The polypeptide is Protein-L-isoaspartate O-methyltransferase (Alkalilimnicola ehrlichii (strain ATCC BAA-1101 / DSM 17681 / MLHE-1)).